Here is a 646-residue protein sequence, read N- to C-terminus: Threonine--tRNA ligase (646 aa).

In terms of domain architecture, TGS spans 1-63; that stretch reads MAQISLTFPD…EADAKIAIHT (63 aa). Residues 247–544 form a catalytic region; sequence DHRKLGKEME…LIENYAGKLP (298 aa). Residues Cys344, His395, and His521 each contribute to the Zn(2+) site.

This sequence belongs to the class-II aminoacyl-tRNA synthetase family. Homodimer. Requires Zn(2+) as cofactor.

Its subcellular location is the cytoplasm. It catalyses the reaction tRNA(Thr) + L-threonine + ATP = L-threonyl-tRNA(Thr) + AMP + diphosphate + H(+). Its function is as follows. Catalyzes the attachment of threonine to tRNA(Thr) in a two-step reaction: L-threonine is first activated by ATP to form Thr-AMP and then transferred to the acceptor end of tRNA(Thr). Also edits incorrectly charged L-seryl-tRNA(Thr). In Cereibacter sphaeroides (strain ATCC 17025 / ATH 2.4.3) (Rhodobacter sphaeroides), this protein is Threonine--tRNA ligase.